Consider the following 307-residue polypeptide: MGSTMEPPGGAYLHLGAVTSPVGTARVLQLAFGCTTFSLVAHRGGFAGVQGTFCMAAWGFCFAVSALVVACEFTRLHGCLRLSWGNFTAAFAMLATLLCATAAVLYPLYFARRECSPEPAGCAARDFRLAASVFAGLLFLAYAVEVALTRARPGQVSSYMATVSGLLKIVQAFVACIIFGALVHDSRYGRYVATQWCVAVYSLCFLATVAVVALSVMGHTGGLGCPFDRLVVVYTFLAVLLYLSAAVIWPVFCFDPKYGEPKRPPNCARGSCPWDSQLVVAIFTYVNLLLYVVDLAYSQRIRFVPSL.

2 consecutive MARVEL domains span residues 17–154 and 159–303; these read AVTS…ARPG and YMAT…RIRF. The next 7 membrane-spanning stretches (helical) occupy residues 53–73, 90–110, 129–149, 163–183, 198–218, 229–249, and 278–298; these read FCMA…ACEF, AFAM…PLYF, LAAS…VALT, VSGL…GALV, VAVY…SVMG, RLVV…AVIW, and LVVA…LAYS.

The protein belongs to the MAL family.

It localises to the membrane. This chain is Myeloid-associated differentiation marker-like protein 2 (MYADML2), found in Homo sapiens (Human).